Reading from the N-terminus, the 301-residue chain is MSDLGSEELEEEGENDLGEYEGERNEVGERHGHGKARLPNGDTYEGSYEFGKRHGQGTYKFKNGARYTGDYVKNKKHGQGTFIYPDGSRYEGEWADDQRHGQGVYYYVNNDTYTGEWFNHQRHGQGTYLYAETGSKYVGTWVHGQQEGAAELIHLNHRYQGKFMNKNPVGPGKYVFDIGCEQHGEYRLTDTERGEEEEEEETLVNIVPKWKALNITELALWTPTLSEEQPPPEGQGQEEPQGLTGVGDPSEDIQAEGFEGELEPRGADEDVDTFRQESQENSYDIDQGNLNFDEEPSDLQD.

Over residues 1–20 (MSDLGSEELEEEGENDLGEY) the composition is skewed to acidic residues. Residues 1–41 (MSDLGSEELEEEGENDLGEYEGERNEVGERHGHGKARLPNG) form a disordered region. MORN repeat units follow at residues 20–43 (YEGERNEVGERHGHGKARLPNGDT), 44–66 (YEGSYEFGKRHGQGTYKFKNGAR), 67–89 (YTGDYVKNKKHGQGTFIYPDGSR), 90–112 (YEGEWADDQRHGQGVYYYVNNDT), 113–135 (YTGEWFNHQRHGQGTYLYAETGS), and 159–181 (YQGKFMNKNPVGPGKYVFDIGCE). Residues 21–31 (EGERNEVGERH) show a composition bias toward basic and acidic residues. Residues 225–301 (LSEEQPPPEG…FDEEPSDLQD (77 aa)) are disordered. Residues 249–261 (PSEDIQAEGFEGE) show a composition bias toward acidic residues. The span at 262 to 278 (LEPRGADEDVDTFRQES) shows a compositional bias: basic and acidic residues. Positions 279–290 (QENSYDIDQGNL) are enriched in polar residues. Positions 292–301 (FDEEPSDLQD) are enriched in acidic residues.

In terms of assembly, component of the axonemal radial spoke 1 (RS1) and 2 (RS2) complexes, at least composed of spoke head proteins RSPH1, RSPH3, RSPH9 and the cilia-specific component RSPH4A or sperm-specific component RSPH6A, spoke stalk proteins RSPH14, DNAJB13, DYDC1, ROPN1L and NME5, and the RS1 complex-specific anchor protein IQUB. Interacts with RSPH3B. Interacts with RSPH4A. Interacts with RSPH6A. As to expression, expressed in the trachea, ependymal cells, oviduct and ependymal cells (at protein level). Germ cell specific. Specifically expressed in testis, and to a lower extent in ovary. Not expressed in somatic tissues.

The protein localises to the cytoplasm. It localises to the chromosome. The protein resides in the cytoskeleton. Its subcellular location is the cilium axoneme. It is found in the flagellum axoneme. Its function is as follows. Functions as part of axonemal radial spoke complexes that play an important part in the motility of sperm and cilia. The polypeptide is Radial spoke head 1 homolog (Rsph1) (Mus musculus (Mouse)).